Reading from the N-terminus, the 466-residue chain is ATP synthase subunit beta (466 aa).

153 to 160 (GGAGVGKT) is a binding site for ATP.

The protein belongs to the ATPase alpha/beta chains family. F-type ATPases have 2 components, CF(1) - the catalytic core - and CF(0) - the membrane proton channel. CF(1) has five subunits: alpha(3), beta(3), gamma(1), delta(1), epsilon(1). CF(0) has three main subunits: a(1), b(2) and c(9-12). The alpha and beta chains form an alternating ring which encloses part of the gamma chain. CF(1) is attached to CF(0) by a central stalk formed by the gamma and epsilon chains, while a peripheral stalk is formed by the delta and b chains.

It localises to the cell membrane. The enzyme catalyses ATP + H2O + 4 H(+)(in) = ADP + phosphate + 5 H(+)(out). In terms of biological role, produces ATP from ADP in the presence of a proton gradient across the membrane. The catalytic sites are hosted primarily by the beta subunits. This is ATP synthase subunit beta from Clostridium acetobutylicum (strain ATCC 824 / DSM 792 / JCM 1419 / IAM 19013 / LMG 5710 / NBRC 13948 / NRRL B-527 / VKM B-1787 / 2291 / W).